The sequence spans 429 residues: 3-oxo-tetronate kinase (429 aa).

Residues serine 268, 366–369 (GGET), and glycine 410 each bind ATP.

The protein belongs to the four-carbon acid sugar kinase family.

The catalysed reaction is 3-dehydro-L-erythronate + ATP = 3-dehydro-4-O-phospho-L-erythronate + ADP + H(+). The enzyme catalyses 3-dehydro-D-erythronate + ATP = 3-dehydro-4-O-phospho-D-erythronate + ADP + H(+). Catalyzes the ATP-dependent phosphorylation of 3-oxo-tetronate to 3-oxo-tetronate 4-phosphate. This chain is 3-oxo-tetronate kinase, found in Pseudomonas savastanoi pv. phaseolicola (strain 1448A / Race 6) (Pseudomonas syringae pv. phaseolicola (strain 1448A / Race 6)).